We begin with the raw amino-acid sequence, 231 residues long: Flagellar L-ring protein (231 aa).

The first 18 residues, 1–18, serve as a signal peptide directing secretion; it reads MNRLLSVFALGGAVLLAG. Cys-19 is lipidated: N-palmitoyl cysteine. Residue Cys-19 is the site of S-diacylglycerol cysteine attachment.

Belongs to the FlgH family. In terms of assembly, the basal body constitutes a major portion of the flagellar organelle and consists of four rings (L,P,S, and M) mounted on a central rod.

Its subcellular location is the cell outer membrane. It is found in the bacterial flagellum basal body. Its function is as follows. Assembles around the rod to form the L-ring and probably protects the motor/basal body from shearing forces during rotation. This Pseudomonas putida (strain GB-1) protein is Flagellar L-ring protein.